Consider the following 595-residue polypeptide: DNA mismatch repair protein MutL (595 aa).

Belongs to the DNA mismatch repair MutL/HexB family.

This protein is involved in the repair of mismatches in DNA. It is required for dam-dependent methyl-directed DNA mismatch repair. May act as a 'molecular matchmaker', a protein that promotes the formation of a stable complex between two or more DNA-binding proteins in an ATP-dependent manner without itself being part of a final effector complex. The sequence is that of DNA mismatch repair protein MutL from Rhodopseudomonas palustris (strain TIE-1).